The primary structure comprises 236 residues: MSLFITFEGPEGSGKSTQARYLKDYLQQAGYPVILTREPGGTPISDAVRRLVLDGQWTAMEPTTETLLFAAARAQLVGEVILPYLKLGGIVLCDRYADSTFAHQGYGLGRNLTELREITRFATGGLQPDLTFFLDLPVEQGLQRKRKQRDDFRESSQLALPLPHLPQPSPSQNEHWNRLDAREIAYHERVRSGYLEMIAADPQRWQVFDAGIERESLTEQLLLAVQPHLTTIKTLS.

9–16 (GPEGSGKS) is an ATP binding site.

It belongs to the thymidylate kinase family.

The enzyme catalyses dTMP + ATP = dTDP + ADP. In terms of biological role, phosphorylation of dTMP to form dTDP in both de novo and salvage pathways of dTTP synthesis. The protein is Thymidylate kinase of Herpetosiphon aurantiacus (strain ATCC 23779 / DSM 785 / 114-95).